We begin with the raw amino-acid sequence, 249 residues long: Ubiquinone biosynthesis O-methyltransferase (249 aa).

4 residues coordinate S-adenosyl-L-methionine: R41, G72, D93, and M136.

Belongs to the methyltransferase superfamily. UbiG/COQ3 family.

It catalyses the reaction a 3-demethylubiquinol + S-adenosyl-L-methionine = a ubiquinol + S-adenosyl-L-homocysteine + H(+). The catalysed reaction is a 3-(all-trans-polyprenyl)benzene-1,2-diol + S-adenosyl-L-methionine = a 2-methoxy-6-(all-trans-polyprenyl)phenol + S-adenosyl-L-homocysteine + H(+). It participates in cofactor biosynthesis; ubiquinone biosynthesis. O-methyltransferase that catalyzes the 2 O-methylation steps in the ubiquinone biosynthetic pathway. This chain is Ubiquinone biosynthesis O-methyltransferase, found in Mesorhizobium japonicum (strain LMG 29417 / CECT 9101 / MAFF 303099) (Mesorhizobium loti (strain MAFF 303099)).